A 329-amino-acid polypeptide reads, in one-letter code: Glycerol-3-phosphate dehydrogenase [NAD(P)+] (329 aa).

4 residues coordinate NADPH: S13, W14, H34, and K105. Sn-glycerol 3-phosphate-binding residues include K105, G134, and S136. Position 138 (A138) interacts with NADPH. Sn-glycerol 3-phosphate-binding residues include K189, D242, S252, R253, and N254. K189 acts as the Proton acceptor in catalysis. R253 lines the NADPH pocket. V277 and E279 together coordinate NADPH.

The protein belongs to the NAD-dependent glycerol-3-phosphate dehydrogenase family.

The protein resides in the cytoplasm. It carries out the reaction sn-glycerol 3-phosphate + NAD(+) = dihydroxyacetone phosphate + NADH + H(+). It catalyses the reaction sn-glycerol 3-phosphate + NADP(+) = dihydroxyacetone phosphate + NADPH + H(+). It functions in the pathway membrane lipid metabolism; glycerophospholipid metabolism. In terms of biological role, catalyzes the reduction of the glycolytic intermediate dihydroxyacetone phosphate (DHAP) to sn-glycerol 3-phosphate (G3P), the key precursor for phospholipid synthesis. The protein is Glycerol-3-phosphate dehydrogenase [NAD(P)+] of Legionella pneumophila subsp. pneumophila (strain Philadelphia 1 / ATCC 33152 / DSM 7513).